The sequence spans 1063 residues: Retinoblastoma-like protein 1 (1063 aa).

A phosphothreonine mark is found at threonine 332, threonine 369, and threonine 385. Residues 383 to 584 are domain A; the sequence is VTTPVASATQ…WEALHASANR (202 aa). A pocket; binds T and E1A region spans residues 383 to 944; it reads VTTPVASATQ…GRVKSFALKY (562 aa). The spacer stretch occupies residues 585–779; the sequence is VPSCEEVIFP…AQDAHLTGVS (195 aa). A phosphoserine mark is found at serine 640, serine 650, serine 748, and serine 761. Positions 780-944 are domain B; the sequence is KPKRTGSLAL…GRVKSFALKY (165 aa). Phosphoserine occurs at positions 959, 970, and 983. At threonine 992 the chain carries Phosphothreonine. Residues serine 1004 and serine 1036 each carry the phosphoserine modification.

This sequence belongs to the retinoblastoma protein (RB) family. In terms of assembly, component of the DREAM complex (also named LINC complex) at least composed of E2F4, E2F5, LIN9, LIN37, LIN52, LIN54, MYBL1, MYBL2, RBL1, RBL2, RBBP4, TFDP1 and TFDP2. The complex exists in quiescent cells where it represses cell cycle-dependent genes. It dissociates in S phase when LIN9, LIN37, LIN52 and LIN54 form a subcomplex that binds to MYBL2. Interacts with AATF. Interacts with KDM5A. Interacts with KMT5B and KMT5C. Interacts with USP4. Interacts with RBBP9. Post-translationally, cell-cycle arrest properties are inactivated by phosphorylation on Thr-332, Ser-640, Ser-959 and Ser-970 by CDK4. As to expression, highly expressed in fetal heart and liver. Expressed at low levels in all other fetal tissues except skeletal muscle. High levels in neonatal spleen and thymus with low levels in other tissues. In adult, highly expressed in testis. Barely detectable in other tissues.

It is found in the nucleus. Functionally, key regulator of entry into cell division. Directly involved in heterochromatin formation by maintaining overall chromatin structure and, in particular, that of constitutive heterochromatin by stabilizing histone methylation. Recruits and targets histone methyltransferases KMT5B and KMT5C, leading to epigenetic transcriptional repression. Controls histone H4 'Lys-20' trimethylation. Probably acts as a transcription repressor by recruiting chromatin-modifying enzymes to promoters. Potent inhibitor of E2F-mediated trans-activation. May act as a tumor suppressor. This chain is Retinoblastoma-like protein 1 (Rbl1), found in Mus musculus (Mouse).